We begin with the raw amino-acid sequence, 549 residues long: Cation/acetate symporter ActP (549 aa).

Residues 1–32 (MKRVLTALAATLPFAANAADAISGAVERQPTN) lie on the Periplasmic side of the membrane. A helical membrane pass occupies residues 33–55 (WQAIIMFLIFVVFTLGITYWASK). Residues 56–75 (RVRSRNDYYTAGGNITGFQN) are Cytoplasmic-facing. A helical transmembrane segment spans residues 76–98 (GLAIAGDYMSAASFLGISALVFT). Over 99–102 (SGYD) the chain is Periplasmic. Residues 103–125 (GLIYSLGFLVGWPIILFLIAERL) form a helical membrane-spanning segment. The Cytoplasmic portion of the chain corresponds to 126 to 145 (RNLGRYTFADVASYRLKQGP). Residues 146–168 (IRILSACGSLVVVALYLIAQMVG) traverse the membrane as a helical segment. Over 169–182 (AGKLIELLFGLNYH) the chain is Periplasmic. The chain crosses the membrane as a helical span at residues 183–205 (IAVVLVGVLMMMYVLFGGMLATT). Residues 206 to 211 (WVQIIK) lie on the Cytoplasmic side of the membrane. A helical membrane pass occupies residues 212 to 234 (AVLLLFGASFMAFMVMKHVGFSF). Residues 235-263 (NNLFSEAMAVHPKGVDIMKPGGLVKDPIS) lie on the Periplasmic side of the membrane. The chain crosses the membrane as a helical span at residues 264–286 (ALSLGLGLMFGTAGLPHILMHFF). Topologically, residues 287–297 (TVSDAREARKS) are cytoplasmic. Residues 298 to 320 (VFYATGFMGYFYILTFIIGFGAI) form a helical membrane-spanning segment. The Periplasmic portion of the chain corresponds to 321–358 (MLVGANPEYKDAAGHLIGGNNMAAVHLANAVGGNLFLG). The chain crosses the membrane as a helical span at residues 359–381 (FISAVAFATILAVVAGLTLAGAS). Over 382–401 (AVSHDLYANVFKKGATEREE) the chain is Cytoplasmic. The chain crosses the membrane as a helical span at residues 402–424 (LRVSKITVLILGVIAIILGVLFE). Residues 425–427 (NQN) are Periplasmic-facing. The helical transmembrane segment at 428-450 (IAFMVGLAFAIAASCNFPIILLS) threads the bilayer. At 451–461 (MYWSKLTTRGA) the chain is on the cytoplasmic side. A helical transmembrane segment spans residues 462 to 484 (MLGGWLGLITAVVLMILGPTIWV). Over 485–493 (QILGHEKAI) the chain is Periplasmic. Residues 494–516 (FPYEYPALFSISVAFLGIWLFSA) traverse the membrane as a helical segment. The Cytoplasmic portion of the chain corresponds to 517-549 (TDNSAEGARERELFRAQFIRSQTGFGVEQGRAH).

Belongs to the sodium:solute symporter (SSF) (TC 2.A.21) family.

It localises to the cell inner membrane. In terms of biological role, transports acetate. In Escherichia coli O6:H1 (strain CFT073 / ATCC 700928 / UPEC), this protein is Cation/acetate symporter ActP (actP).